The sequence spans 567 residues: Delta(24)-sterol reductase (567 aa).

Residues 1 to 24 (MSDLEAPLRPKRKKIWVDYFVKFR) lie on the Lumenal side of the membrane. The helical; Signal-anchor transmembrane segment at 25-45 (WILVIFVVLPISFTLYFLTYL) threads the bilayer. The FAD-binding PCMH-type domain maps to 45–231 (LGDVRSEWKS…VAAEVKLIPI (187 aa)). Over 46 to 567 (GDVRSEWKSF…AYPEVDQPPD (522 aa)) the chain is Cytoplasmic. Residues 520–541 (CRRKYGAVGTFMSVYYKCKKGR) form an interaction with calmodulin region. Residues 548–567 (REAEQAHLDTAYPEVDQPPD) are disordered.

Belongs to the DIMINUTO family. As to expression, highly expressed in the apical region and root tips and lower levels in immature and mature internodes and leaves.

Its subcellular location is the membrane. It carries out the reaction lathosterol + NADP(+) = 5alpha-cholesta-7,24-dien-3beta-ol + NADPH + H(+). In terms of biological role, plays a critical role in the general process of plant cell elongation. The protein is Delta(24)-sterol reductase (DIM) of Pisum sativum (Garden pea).